The following is an 83-amino-acid chain: Short neurotoxin B (83 aa).

A signal peptide spans M1–T21. 4 cysteine pairs are disulfide-bonded: C24–C45, C38–C62, C64–C75, and C76–C81.

It belongs to the three-finger toxin family. Short-chain subfamily. Type I alpha-neurotoxin sub-subfamily. As to expression, expressed by the venom gland.

It localises to the secreted. Its function is as follows. Binds to muscle nicotinic acetylcholine receptor (nAChR) and inhibit acetylcholine from binding to the receptor, thereby impairing neuromuscular transmission. This is Short neurotoxin B from Laticauda laticaudata (Blue-ringed sea krait).